The primary structure comprises 261 residues: Carbonic anhydrase 1 (261 aa).

Positions 1-31 (MASPDWGYDDKNGPEQWSKLYPIANGNNQSP) are disordered. Ala2 carries the N-acetylalanine modification. One can recognise an Alpha-carbonic anhydrase domain in the interval 4-261 (PDWGYDDKNG…LKGRTVRASF (258 aa)). Catalysis depends on His65, which acts as the Proton donor/acceptor. Residues His65, His68, His95, His97, and His120 each coordinate Zn(2+). Substrate is bound by residues Thr200 and 200–201 (TH). His201 is a binding site for Zn(2+). A disordered region spans residues 241–261 (PMQHNNRPTQPLKGRTVRASF).

Belongs to the alpha-carbonic anhydrase family. It depends on Zn(2+) as a cofactor.

Its subcellular location is the cytoplasm. The enzyme catalyses hydrogencarbonate + H(+) = CO2 + H2O. It carries out the reaction urea = cyanamide + H2O. Activated by histamine, imidazole, L-adrenaline, L- and D-histidine, and L- and D-phenylalanine. Inhibited by coumarins, sulfonamide derivatives such as acetazolamide, benzenesulfonamide and derivatives (4-carboxyethylbenzene-sulfonamide, 4-carboxyethylbenzene-sulfonamide ethyl ester, 4-(acetyl-2-aminoethyl)benzene-sulfonamide, 4-aminoethylbenzene-sulfonamide), and 'prong inhibitors' BR15, BR17, BR22 and BR30. Activated by a short exposition to Foscarnet (phosphonoformate trisodium salt), but inhibited by a long one. Esterase activity weakly reduced by cyanamide. Catalyzes the reversible hydration of carbon dioxide. Can hydrate cyanamide to urea. This is Carbonic anhydrase 1 (CA1) from Homo sapiens (Human).